We begin with the raw amino-acid sequence, 166 residues long: Phosphopantetheine adenylyltransferase (166 aa).

Ser-11 is a binding site for substrate. Residues 11 to 12 (SF) and His-19 contribute to the ATP site. Substrate is bound by residues Lys-43, Ala-76, and Arg-90. ATP contacts are provided by residues 91–93 (GLR), Glu-101, and 126–132 (MQPISSS).

Belongs to the bacterial CoaD family. Homohexamer. Mg(2+) is required as a cofactor.

The protein localises to the cytoplasm. It catalyses the reaction (R)-4'-phosphopantetheine + ATP + H(+) = 3'-dephospho-CoA + diphosphate. It participates in cofactor biosynthesis; coenzyme A biosynthesis; CoA from (R)-pantothenate: step 4/5. Its function is as follows. Reversibly transfers an adenylyl group from ATP to 4'-phosphopantetheine, yielding dephospho-CoA (dPCoA) and pyrophosphate. This chain is Phosphopantetheine adenylyltransferase, found in Streptococcus uberis (strain ATCC BAA-854 / 0140J).